We begin with the raw amino-acid sequence, 166 residues long: tRNA-acetylating toxin (166 aa).

The segment at 1–22 is disordered; the sequence is MSGYSAPRRISDADDVTSFSSG. In terms of domain architecture, N-acetyltransferase spans 1 to 162; it reads MSGYSAPRRI…LMLLMKDARA (162 aa). Residue Tyr-138 is part of the active site.

The protein belongs to the acetyltransferase family. GNAT subfamily. As to quaternary structure, homodimer, forms a complex with cognate antitoxin TacA.

It catalyses the reaction glycyl-tRNA(Gly) + acetyl-CoA = N-acetylglycyl-tRNA(Gly) + CoA + H(+). In terms of biological role, toxic component of a type II toxin-antitoxin (TA) system. Overexpression of this gene alone in M.smegmatis inhibits growth, while overexpression of the tacA-tacT operon does not. Acetylates glycyl-tRNA(Gly) but not other tRNAs, blocks in vitro translation in the presence, but not absence, of acetyl-coenzyme A. Peptidyl-tRNA hydrolase (pth) counteracts the product of this enzyme in vitro. Neutralized by cognate antitoxin TacA. Does not seem to be active in laboratory growth conditions. Its function is as follows. TacA-TacT both represses and derepresses expression of its own operon. The polypeptide is tRNA-acetylating toxin (Mycobacterium tuberculosis (strain ATCC 25618 / H37Rv)).